The chain runs to 380 residues: Cytochrome b (380 aa).

Transmembrane regions (helical) follow at residues 34–54, 78–99, 114–134, and 179–199; these read FGSL…FLAM, WLLR…YFHI, WYTG…GYIL, and FFTL…IHLL. 2 residues coordinate heme b: histidine 84 and histidine 98. Heme b contacts are provided by histidine 183 and histidine 197. Residue histidine 202 participates in a ubiquinone binding. 4 helical membrane-spanning segments follow: residues 227–247, 289–309, 321–341, and 348–368; these read YKDL…TLFL, LGGV…PTLH, FTQI…WIGA, and FIMI…LLIP.

The protein belongs to the cytochrome b family. In terms of assembly, the cytochrome bc1 complex contains 3 respiratory subunits (MT-CYB, CYC1 and UQCRFS1), 2 core proteins (UQCRC1 and UQCRC2) and probably 6 low-molecular weight proteins. It depends on heme b as a cofactor.

Its subcellular location is the mitochondrion inner membrane. Its function is as follows. Component of the ubiquinol-cytochrome c reductase complex (complex III or cytochrome b-c1 complex) that is part of the mitochondrial respiratory chain. The b-c1 complex mediates electron transfer from ubiquinol to cytochrome c. Contributes to the generation of a proton gradient across the mitochondrial membrane that is then used for ATP synthesis. This is Cytochrome b (MT-CYB) from Pelomedusa subrufa (African side-necked turtle).